Reading from the N-terminus, the 299-residue chain is MEDSMDMDNIAPLRPQNFLFGCELKADKKEYSFKVEDDENEHQLSLRTVSLGASAKDELHVVEAEGINYEGKTIKIALASLKPSVQPTVSLGGFEITPPVILRLKSGSGPVYVSGQHLVALEDLESSDDEDEEHEPSPKNAKRIAPDSASKVPRKKTRLEEEEEDSDEDDDDDEDDDDEDDDEEEEETPVKKTDSTKSKAAQKLNHNGKASALSTTQKTPKTPEQKGKQDTKPQTPKTPKTPLSSEEIKAKMQTYLEKGNVLPKVEVKFANYVKNCFRTENQKVIEDLWKWRQSLKDGK.

Residues 125–134 show a composition bias toward acidic residues; it reads ESSDDEDEEH. The disordered stretch occupies residues 125–247; sequence ESSDDEDEEH…TPKTPLSSEE (123 aa). A Nuclear localization signal motif is present at residues 153–158; sequence PRKKTR. A compositionally biased stretch (acidic residues) spans 160-187; the sequence is EEEEEDSDEDDDDDEDDDDEDDDEEEEE. The span at 188–197 shows a compositional bias: basic and acidic residues; sequence TPVKKTDSTK. The short motif at 189–195 is the Nuclear localization signal element; sequence PVKKTDS. Repeats lie at residues 218–220, 221–223, 237–239, and 240–242; these read KTP. A 4 X 3 AA repeats of K-T-P region spans residues 218–242; it reads KTPKTPEQKGKQDTKPQTPKTPKTP. Basic and acidic residues predominate over residues 221 to 231; it reads KTPEQKGKQDT. Residues 232–242 are compositionally biased toward low complexity; the sequence is KPQTPKTPKTP.

It belongs to the nucleoplasmin family. As to quaternary structure, decamer formed by two pentameric rings associated in a head-to-head fashion. In terms of processing, phosphorylated.

The protein localises to the cytoplasm. Its subcellular location is the nucleus. It localises to the nucleoplasm. It is found in the nucleolus. Its function is as follows. Acts as a chaperonin for the core histones H3, H2B and H4. Associated with nucleolar ribonucleoprotein structures and bind single-stranded nucleic acids. It may function in the assembly and/or transport of ribosome. May stimulate endonuclease activity on apurinic/apyrimidinic (AP) double-stranded DNA. May inhibit endonuclease activity on AP single-stranded RNA. The sequence is that of Nucleophosmin (npm1) from Xenopus laevis (African clawed frog).